The chain runs to 179 residues: Large ribosomal subunit protein bL9 (179 aa).

The interval 155 to 179 (KPEEAPVPVAEEPTAETEQAEVAAE) is disordered. Residues 167 to 179 (PTAETEQAEVAAE) are compositionally biased toward acidic residues.

The protein belongs to the bacterial ribosomal protein bL9 family.

Binds to the 23S rRNA. This is Large ribosomal subunit protein bL9 from Porphyromonas gingivalis (strain ATCC BAA-308 / W83).